Consider the following 1423-residue polypeptide: ABC transporter G family member 40 (1423 aa).

The span at 1–19 (MEGTSFHQASNSMRRNSSV) shows a compositional bias: polar residues. Residues 1–36 (MEGTSFHQASNSMRRNSSVWKKDSGREIFSRSSREE) are disordered. An N-linked (GlcNAc...) asparagine glycan is attached at Asn16. A compositionally biased stretch (basic and acidic residues) spans 20 to 34 (WKKDSGREIFSRSSR). The ABC transporter 1 domain maps to 154–427 (LNTLHLVPNR…FETMGFKCPP (274 aa)). 187 to 194 (GPPSSGKT) lines the ATP pocket. N-linked (GlcNAc...) asparagine glycosylation is present at Asn376. Residues 505 to 718 (ELVKTSFSRE…GQNAILANEF (214 aa)) enclose the ABC transmembrane type-2 1 domain. Helical transmembrane passes span 523-543 (FVYYFKFGQLLVMAFLTMTLF), 562-582 (ALFFILMMLMFNGMSELSMTI), 611-631 (IPISFMEAALTTFITYYVIGF), 643-663 (ILLVLMNQMASALFKMVAALG), 667-687 (IVANTFGAFAMLVFFALGGVV), and 696-716 (WWIWGYWISPIMYGQNAILAN). Asn729 is a glycosylation site (N-linked (GlcNAc...) asparagine). A helical transmembrane segment spans residues 756–776 (GALLGFVVLFNFGFTLALTFL). Residues 825 to 1077 (ITFDNVVYSV…HLINYFESIQ (253 aa)) form the ABC transporter 2 domain. 870–877 (GVSGAGKT) contacts ATP. An N-linked (GlcNAc...) asparagine glycan is attached at Asn895. Thr962 bears the Phosphothreonine mark. The region spanning 1150–1364 (TQCMASLWKQ…TLYGLIASQF (215 aa)) is the ABC transmembrane type-2 2 domain. Transmembrane regions (helical) follow at residues 1174–1194 (FLFTIGIALMFGTMFWDLGGK), 1207–1227 (SMYTAVLFLGLQNAASVQPVV), 1257–1277 (IPYVLVQAIVYGLIVYAMIGF), 1284–1304 (FFWYLFFMYGSFLTFTFYGMM), 1314–1334 (IASVVSSAFYGIWNLFSGFLI), and 1341–1361 (VWWEWYYWLCPVAWTLYGLIA). A glycan (N-linked (GlcNAc...) asparagine) is linked at Asn1375. The helical transmembrane segment at 1395–1415 (VVAAMNVIFPLLFAVIFAIGI) threads the bilayer.

Belongs to the ABC transporter superfamily. ABCG family. PDR (TC 3.A.1.205) subfamily. As to quaternary structure, interacts with LECRK91 and LECRK92. As to expression, mostly observed in inflorescence meristems relative to cauline leaves and developing siliques. Ubiquitous with higher levels in leaves, stems and flowers. Also present in primary and lateral roots. In seeds, mainly expressed in the embryo and, to a lesser extent, in the endosperm.

Its subcellular location is the cell membrane. It catalyses the reaction abscisate(out) + ATP + H2O = abscisate(in) + ADP + phosphate + H(+). Inhibited by glibenclamide, verapamil and vanadate (ABC transporters inhibitors). High affinity abscisic acid (ABA) transporter that mediates the import of ABA, with a preference for (+)-ABA, through the plasma membrane, especially in guard cells, and is involved in the intercellular and intracellular ABA signaling pathways leading, for example, to stomatal closure, thus conferring drought tolerance. Together with ABCG30, import into the embryo the ABA delivered from the endosperm via ABCG25 and ABCG31-mediated export to suppress radicle extension and subsequent embryonic growth. May be a general defense protein. Functions as a pump to exclude Pb(2+) ions and/or Pb(2+)-containing toxic compounds from the cytoplasm. Contributes to Pb(2+) ions resistance. Confers some resistance to the terpene sclareol. Functionally, (Microbial infection) Involved in resistance response to the pathogenic oomycetes Phytophthora infestans and Phytophthora capsici. This is ABC transporter G family member 40 from Arabidopsis thaliana (Mouse-ear cress).